Consider the following 477-residue polypeptide: UDP-N-acetylmuramate--L-alanine ligase (477 aa).

Residue 122 to 128 (GTHGKTT) participates in ATP binding.

Belongs to the MurCDEF family.

The protein localises to the cytoplasm. It carries out the reaction UDP-N-acetyl-alpha-D-muramate + L-alanine + ATP = UDP-N-acetyl-alpha-D-muramoyl-L-alanine + ADP + phosphate + H(+). Its pathway is cell wall biogenesis; peptidoglycan biosynthesis. In terms of biological role, cell wall formation. The polypeptide is UDP-N-acetylmuramate--L-alanine ligase (Xylella fastidiosa (strain 9a5c)).